Consider the following 415-residue polypeptide: Phosphoribosylamine--glycine ligase (415 aa).

In terms of domain architecture, ATP-grasp spans lysine 108–glutamate 311. ATP is bound at residue isoleucine 134–serine 191. Residues glutamate 281 and asparagine 283 each coordinate Mg(2+).

Belongs to the GARS family. Mg(2+) is required as a cofactor. The cofactor is Mn(2+).

It catalyses the reaction 5-phospho-beta-D-ribosylamine + glycine + ATP = N(1)-(5-phospho-beta-D-ribosyl)glycinamide + ADP + phosphate + H(+). It functions in the pathway purine metabolism; IMP biosynthesis via de novo pathway; N(1)-(5-phospho-D-ribosyl)glycinamide from 5-phospho-alpha-D-ribose 1-diphosphate: step 2/2. The polypeptide is Phosphoribosylamine--glycine ligase (Staphylococcus aureus (strain MRSA252)).